A 212-amino-acid polypeptide reads, in one-letter code: Ras-related protein Rab-15 (212 aa).

10 residues coordinate GTP: serine 17, glycine 18, valine 19, glycine 20, lysine 21, threonine 22, cysteine 23, serine 35, serine 39, and threonine 40. Threonine 22 contacts Mg(2+). Short sequence motifs (switch) lie at residues 31-45 (NEFH…GVDF) and 63-80 (DTAG…YYRR). Mg(2+)-binding residues include threonine 40 and aspartate 63. GTP contacts are provided by glycine 66, asparagine 121, lysine 122, aspartate 124, serine 151, and alanine 152. Residues cysteine 210 and cysteine 212 are each lipidated (S-geranylgeranyl cysteine). Cysteine 212 carries the post-translational modification Cysteine methyl ester.

The protein belongs to the small GTPase superfamily. Rab family. In terms of assembly, the GTP bound form of RAB15 interacts with REP15. Interacts (GTP-bound form) with MICAL1, MICAL3, MICALCL, EHBP1 and EHBP1L1. Mg(2+) serves as cofactor. In terms of tissue distribution, expressed predominantly in neural tissues.

The protein resides in the cell membrane. It carries out the reaction GTP + H2O = GDP + phosphate + H(+). Its activity is regulated as follows. Regulated by guanine nucleotide exchange factors (GEFs) which promote the exchange of bound GDP for free GTP. Regulated by GTPase activating proteins (GAPs) which increase the GTP hydrolysis activity. Inhibited by GDP dissociation inhibitors (GDIs). Its function is as follows. The small GTPases Rab are key regulators of intracellular membrane trafficking, from the formation of transport vesicles to their fusion with membranes. Rabs cycle between an inactive GDP-bound form and an active GTP-bound form that is able to recruit to membranes different sets of downstream effectors directly responsible for vesicle formation, movement, tethering and fusion. RAB15 may act in concert with RAB3A in regulating aspects of synaptic vesicle membrane flow within the nerve terminal. The chain is Ras-related protein Rab-15 from Rattus norvegicus (Rat).